The chain runs to 100 residues: MATMTKKKLISTISQDHKIHPNHVRTVIQNFLDKMTDALVQGDRLEFRDFGVLQVVERKPKVGRNPKNAAVPIHIPARRAVKFTPGKRMKRLIETPTKSS.

It belongs to the bacterial histone-like protein family.

In terms of biological role, histone-like DNA-binding protein which is capable of wrapping DNA to stabilize it, and thus to prevent its denaturation under extreme environmental conditions. This Chlamydia muridarum (strain MoPn / Nigg) protein is Probable DNA-binding protein HU (hup).